The primary structure comprises 205 residues: High frequency lysogenization protein HflD homolog (205 aa).

The protein belongs to the HflD family.

Its subcellular location is the cytoplasm. It localises to the cell inner membrane. This chain is High frequency lysogenization protein HflD homolog, found in Haemophilus influenzae (strain ATCC 51907 / DSM 11121 / KW20 / Rd).